Reading from the N-terminus, the 254-residue chain is Alcohol dehydrogenase (254 aa).

Position 9-32 (9-32 (IFVAGLGGIGLDTSRELVKRDLKN)) interacts with NAD(+). Ser-138 contacts substrate. The active-site Proton acceptor is the Tyr-151.

This sequence belongs to the short-chain dehydrogenases/reductases (SDR) family. Homodimer.

It carries out the reaction a primary alcohol + NAD(+) = an aldehyde + NADH + H(+). The catalysed reaction is a secondary alcohol + NAD(+) = a ketone + NADH + H(+). The protein is Alcohol dehydrogenase (Adh) of Drosophila paulistorum (Fruit fly).